A 177-amino-acid chain; its full sequence is MLESKMKLVGKIREAHGLKGDLYVLVFSGEIAWAKRMKTFGLKAKDSDEIKTFTVERTKPFKKGLIVKAAEVADRTAAEGLEHMEFFIDDELMVSKPGETIFLSEIKNFKLKNPEQTVLGEIVGFSSNGVQDLLVVETTDGKTAEVPFVDAFIKKIDFKHQAVVMDLPEGLFDIENA.

The 74-residue stretch at 98 to 171 (GETIFLSEIK…AVVMDLPEGL (74 aa)) folds into the PRC barrel domain.

This sequence belongs to the RimM family. In terms of assembly, binds ribosomal protein uS19.

Its subcellular location is the cytoplasm. An accessory protein needed during the final step in the assembly of 30S ribosomal subunit, possibly for assembly of the head region. Essential for efficient processing of 16S rRNA. May be needed both before and after RbfA during the maturation of 16S rRNA. It has affinity for free ribosomal 30S subunits but not for 70S ribosomes. This Bdellovibrio bacteriovorus (strain ATCC 15356 / DSM 50701 / NCIMB 9529 / HD100) protein is Ribosome maturation factor RimM.